Here is a 565-residue protein sequence, read N- to C-terminus: Ubiquitin carboxyl-terminal hydrolase 39 (565 aa).

Composition is skewed to basic and acidic residues over residues 1–21 (MSGR…ESES) and 28–39 (VKRERDREREPE). Disordered regions lie at residues 1-61 (MSGR…SARE) and 75-96 (EREV…GRVD). Ser-46 carries the post-translational modification Phosphoserine. Lys-51 participates in a covalent cross-link: Glycyl lysine isopeptide (Lys-Gly) (interchain with G-Cter in SUMO2). Ser-82 is subject to Phosphoserine. Over residues 85–96 (EREVRAKNGRVD) the composition is skewed to basic and acidic residues. The segment at 103 to 200 (RHCPYLDTIN…YVLKPTFTKQ (98 aa)) adopts a UBP-type; degenerate zinc-finger fold. 4 residues coordinate Zn(2+): Cys-136, Cys-139, His-155, and His-161. The region spanning 225 to 555 (VGLNNIKAND…EAYIQIWKRR (331 aa)) is the USP domain.

Belongs to the peptidase C19 family. As to quaternary structure, the U4/U6-U5 tri-snRNP complex is a building block of the precatalytic spliceosome (spliceosome B complex). Component of the U4/U6-U5 tri-snRNP complex composed of the U4, U6 and U5 snRNAs and at least PRPF3, PRPF4, PRPF6, PRPF8, PRPF31, SNRNP200, TXNL4A, SNRNP40, SNRPB, SNRPD1, SNRPD2, SNRPD3, SNRPE, SNRPF, SNRPG, DDX23, CD2BP2, PPIH, SNU13, EFTUD2, SART1 and USP39, plus LSM2, LSM3, LSM4, LSM5, LSM6, LSM7 and LSM8.

It is found in the nucleus. It catalyses the reaction Thiol-dependent hydrolysis of ester, thioester, amide, peptide and isopeptide bonds formed by the C-terminal Gly of ubiquitin (a 76-residue protein attached to proteins as an intracellular targeting signal).. Its function is as follows. Deubiquitinating enzyme that plays a role in many cellular processes including cellular antiviral response, epithelial morphogenesis, DNA repair or B-cell development. Plays a role in pre-mRNA splicing as a component of the U4/U6-U5 tri-snRNP, one of the building blocks of the precatalytic spliceosome. Specifically regulates immunoglobulin gene rearrangement in a spliceosome-dependent manner, which involves modulating chromatin interactions at the Igh locus and therefore plays an essential role in B-cell development. Regulates AURKB mRNA levels, and thereby plays a role in cytokinesis and in the spindle checkpoint. Regulates apoptosis and G2/M cell cycle checkpoint in response to DNA damage by deubiquitinating and stabilizing CHK2. Also plays an important role in DNA repair by controlling the recruitment of XRCC4/LIG4 to DNA double-strand breaks for non-homologous end-joining repair. Participates in antiviral activity by affecting the type I IFN signaling by stabilizing STAT1 and decreasing its 'Lys-6'-linked ubiquitination. Contributes to non-canonical Wnt signaling during epidermal differentiation. Acts as a negative regulator NF-kappa-B activation through deubiquitination of 'Lys-48'-linked ubiquitination of NFKBIA. In Pongo abelii (Sumatran orangutan), this protein is Ubiquitin carboxyl-terminal hydrolase 39 (USP39).